Consider the following 156-residue polypeptide: 6,7-dimethyl-8-ribityllumazine synthase (156 aa).

5-amino-6-(D-ribitylamino)uracil-binding positions include Phe-23, Ser-57–Glu-59, and Ala-81–Val-83. Glu-86–Thr-87 is a (2S)-2-hydroxy-3-oxobutyl phosphate binding site. The active-site Proton donor is the His-89. 5-amino-6-(D-ribitylamino)uracil is bound at residue Phe-114. Arg-128 contributes to the (2S)-2-hydroxy-3-oxobutyl phosphate binding site.

This sequence belongs to the DMRL synthase family.

The catalysed reaction is (2S)-2-hydroxy-3-oxobutyl phosphate + 5-amino-6-(D-ribitylamino)uracil = 6,7-dimethyl-8-(1-D-ribityl)lumazine + phosphate + 2 H2O + H(+). It participates in cofactor biosynthesis; riboflavin biosynthesis; riboflavin from 2-hydroxy-3-oxobutyl phosphate and 5-amino-6-(D-ribitylamino)uracil: step 1/2. Functionally, catalyzes the formation of 6,7-dimethyl-8-ribityllumazine by condensation of 5-amino-6-(D-ribitylamino)uracil with 3,4-dihydroxy-2-butanone 4-phosphate. This is the penultimate step in the biosynthesis of riboflavin. In Salinibacter ruber (strain DSM 13855 / M31), this protein is 6,7-dimethyl-8-ribityllumazine synthase.